Consider the following 1155-residue polypeptide: uncharacterized protein (1155 aa).

A signal peptide spans 1 to 19; it reads MKKNIFITSLLILLLLLSS. The N-palmitoyl cysteine moiety is linked to residue C20. A lipid anchor (S-diacylglycerol cysteine) is attached at C20. A run of 4 helical transmembrane segments spans residues 289 to 309, 395 to 415, 424 to 444, and 459 to 479; these read ISVSAILTLYIMFTVLSFLIG, LGFIYIILYLIALYFIFFLIF, ALITIGMIIIMGPIFICFMLF, and ISYALQPIILFAGIAFISMII.

Belongs to the TrbL/VirB6 family.

Its subcellular location is the cell membrane. This is an uncharacterized protein from Rickettsia prowazekii (strain Madrid E).